The primary structure comprises 1147 residues: SR-related and CTD-associated factor 4 (1147 aa).

Residues 1–139 (MDAVNAFNQE…PLLDMAAGTS (139 aa)) form the CID domain. Lys49 bears the N6-acetyllysine mark. Disordered regions lie at residues 145–179 (AENV…AVPQ), 235–254 (KTTP…PEQK), 269–331 (DEPE…QQPA), and 424–502 (VKRH…KPET). Ser154 carries the phosphoserine modification. Low complexity-rich tracts occupy residues 283–292 (TAVTTTAPAA) and 299–310 (TATVPAAAAPAA). Over residues 424-433 (VKRHMSDNRK) the composition is skewed to basic and acidic residues. Positions 434–475 (SRSRSASRSPKRRRSRSGSRSRRSRHRRSRSRSRDRRRHSPR) are enriched in basic residues. Positions 477 to 492 (RSQERRDREKERERRQ) are enriched in basic and acidic residues. The 75-residue stretch at 508–582 (TTLWVGQLDK…KSIKIAWALN (75 aa)) folds into the RRM domain. Disordered stretches follow at residues 629-661 (DWKG…IPKP) and 879-1147 (RPMP…EAPR). At Ser656 the chain carries Phosphoserine. The span at 879-913 (RPMPPHMMHRGPPPGPGGFAMPPPHGMKGPFPPHG) shows a compositional bias: pro residues. Positions 941-965 (QQPPQQPQQQPQPQAPQQPQQQQQQ) are enriched in low complexity. The segment covering 966 to 977 (QPPPSQQPPPTQ) has biased composition (pro residues). Ser1004 carries the phosphoserine modification. Residues 1009–1085 (VENDRERYGN…RGKEKPEVTD (77 aa)) are compositionally biased toward basic and acidic residues.

Interacts with POLR2A; via C-terminal heptapeptide repeat domain (CTD) phosphorylated at 'Ser-2' and 'Ser-5'.

It localises to the nucleus. Its function is as follows. Anti-terminator protein required to prevent early mRNA termination during transcription. Together with SCAF8, acts by suppressing the use of early, alternative poly(A) sites, thereby preventing the accumulation of non-functional truncated proteins. Mechanistically, associates with the phosphorylated C-terminal heptapeptide repeat domain (CTD) of the largest RNA polymerase II subunit (POLR2A), and subsequently binds nascent RNA upstream of early polyadenylation sites to prevent premature mRNA transcript cleavage and polyadenylation. Independently of SCAF8, also acts as a suppressor of transcriptional readthrough. The chain is SR-related and CTD-associated factor 4 from Homo sapiens (Human).